The sequence spans 528 residues: MSKVWVGGFLCVYGEEPSEECLALPRDTVQKELRSGNIPLPLNINHNEKATIGMVRGLFDLEHGLFCVAQIQSQTFMDIIRNIASKSKLIAAGSVIEPLPPDPEIECLSSSFPGLSLSSKVLQDENLDGKPFFHHVSVCGVGRRPGTIAIFGREISWILDRFSCISESEKRQVLEGVNVYSQGFDENLFSADLYDLLADSLDTSYIRKRFPKLQLDKQLCGLSKCTYIKASEPPVEIIVATGKVAGDQVQLTTEPGSELAVETCDVSVVHGNYDAVESATATTAMSNQNLPNTTPLLSSPPFSDCVFLPKDAFFSLLNVTTGQQPKVVPPVSVHPPVTEQYQMLPYSESAAKIAEQESNRYHSPCQTMYPYWQYSPVPQYPAVLHGYRQPKTFKKRHFQSDSEDELSFPGDPEYTKKRRRHKVDNDDDKEMAREKNDLRELVDMIGMLRQEINALKHVRAQSPQRHVVPMETLPTIEEKGAASPKPSILNASLTPETVNRSLAGQNESMDLLKLNKKLFVDALNKMDS.

Catalysis depends on charge relay system residues His-46, Ser-116, and His-135. The interaction with pAP stretch occupies residues 270–288 (HGNYDAVESATATTAMSNQ). Residues 394–432 (KKRHFQSDSEDELSFPGDPEYTKKRRRHKVDNDDDKEMA) form a disordered region. Positions 416-422 (KKRRRHK) match the Nuclear localization signal motif. Residues 508 to 528 (SMDLLKLNKKLFVDALNKMDS) form an interaction with major capsid protein region.

The protein belongs to the herpesviridae capsid scaffolding protein family. As to quaternary structure, homomultimer. Interacts with major capsid protein. Exists in a monomer-dimer equilibrium with the dimer being the active species. In terms of processing, capsid scaffolding protein is cleaved by assemblin after formation of the spherical procapsid. As a result, the capsid obtains its mature, icosahedral shape. Cleavages occur at two or more sites: release (R-site) and maturation (M-site).

Its subcellular location is the host cytoplasm. It is found in the host nucleus. The enzyme catalyses Cleaves -Ala-|-Ser- and -Ala-|-Ala- bonds in the scaffold protein.. Functionally, acts as a scaffold protein by binding major capsid protein in the cytoplasm, inducing the nuclear localization of both proteins. Multimerizes in the nucleus such as major capsid protein forms the icosahedral T=16 capsid. Autocatalytic cleavage releases the assembly protein, and subsequently abolishes interaction with major capsid protein. Cleavages products are evicted from the capsid before or during DNA packaging. Protease that plays an essential role in virion assembly within the nucleus. Catalyzes the cleavage of the assembly protein after formation of the spherical procapsid. By that cleavage, the capsid matures and gains its icosahedral shape. The cleavage sites seem to include -Ala-Ser-, -Ala-Ala-, as well as Ala-Thr bonds. Assemblin and cleavages products are evicted from the capsid before or during DNA packaging. Its function is as follows. Plays a major role in capsid assembly. Acts as a scaffold protein by binding major capsid protein. Multimerizes in the nucleus such as major capsid protein forms the icosahedral T=16 capsid. Cleaved by assemblin after capsid completion. The cleavages products are evicted from the capsid before or during DNA packaging. The chain is Capsid scaffolding protein (U53) from Homo sapiens (Human).